A 273-amino-acid polypeptide reads, in one-letter code: Large ribosomal subunit protein uL2 (273 aa).

Disordered regions lie at residues 28–54 and 221–273; these read KPYA…TRHI and RGTA…RRTK. Positions 39–48 are enriched in low complexity; sequence KSGGRNNNGR.

It belongs to the universal ribosomal protein uL2 family. In terms of assembly, part of the 50S ribosomal subunit. Forms a bridge to the 30S subunit in the 70S ribosome.

One of the primary rRNA binding proteins. Required for association of the 30S and 50S subunits to form the 70S ribosome, for tRNA binding and peptide bond formation. It has been suggested to have peptidyltransferase activity; this is somewhat controversial. Makes several contacts with the 16S rRNA in the 70S ribosome. The chain is Large ribosomal subunit protein uL2 from Pectobacterium carotovorum subsp. carotovorum (strain PC1).